Consider the following 303-residue polypeptide: Methionyl-tRNA formyltransferase (303 aa).

106-109 (SLLP) contributes to the (6S)-5,6,7,8-tetrahydrofolate binding site.

The protein belongs to the Fmt family.

The enzyme catalyses L-methionyl-tRNA(fMet) + (6R)-10-formyltetrahydrofolate = N-formyl-L-methionyl-tRNA(fMet) + (6S)-5,6,7,8-tetrahydrofolate + H(+). Attaches a formyl group to the free amino group of methionyl-tRNA(fMet). The formyl group appears to play a dual role in the initiator identity of N-formylmethionyl-tRNA by promoting its recognition by IF2 and preventing the misappropriation of this tRNA by the elongation apparatus. This Thermosipho melanesiensis (strain DSM 12029 / CIP 104789 / BI429) protein is Methionyl-tRNA formyltransferase.